Reading from the N-terminus, the 79-residue chain is Sec-independent protein translocase protein TatA (79 aa).

Residues methionine 1–glycine 21 traverse the membrane as a helical segment. Residues alanine 46–arginine 79 form a disordered region. A compositionally biased stretch (basic and acidic residues) spans valine 66–arginine 79.

This sequence belongs to the TatA/E family. As to quaternary structure, the Tat system comprises two distinct complexes: a TatABC complex, containing multiple copies of TatA, TatB and TatC subunits, and a separate TatA complex, containing only TatA subunits. Substrates initially bind to the TatABC complex, which probably triggers association of the separate TatA complex to form the active translocon.

Its subcellular location is the cell inner membrane. Functionally, part of the twin-arginine translocation (Tat) system that transports large folded proteins containing a characteristic twin-arginine motif in their signal peptide across membranes. TatA could form the protein-conducting channel of the Tat system. The sequence is that of Sec-independent protein translocase protein TatA from Paraburkholderia phytofirmans (strain DSM 17436 / LMG 22146 / PsJN) (Burkholderia phytofirmans).